Here is a 308-residue protein sequence, read N- to C-terminus: Ribosomal protein L11 methyltransferase (308 aa).

Residues Thr160, Gly181, Asp203, and Asn245 each coordinate S-adenosyl-L-methionine.

Belongs to the methyltransferase superfamily. PrmA family.

The protein localises to the cytoplasm. The catalysed reaction is L-lysyl-[protein] + 3 S-adenosyl-L-methionine = N(6),N(6),N(6)-trimethyl-L-lysyl-[protein] + 3 S-adenosyl-L-homocysteine + 3 H(+). Functionally, methylates ribosomal protein L11. The polypeptide is Ribosomal protein L11 methyltransferase (Thermoanaerobacter sp. (strain X514)).